A 299-amino-acid polypeptide reads, in one-letter code: N-acetylaspartate synthetase (299 aa).

The span at 44–57 (AAPGPAAAPPPAAG) shows a compositional bias: pro residues. The interval 44 to 70 (AAPGPAAAPPPAAGPQPHGGTGGAGPP) is disordered. The span at 60-70 (PHGGTGGAGPP) shows a compositional bias: gly residues. The chain crosses the membrane as a helical span at residues 118 to 138 (YALLAALCFAVTRSLLLTCLV). The N-acetyltransferase domain maps to 143–280 (LALRYYYSRK…VLPGMTLSLA (138 aa)).

This sequence belongs to the NAT8 family. Expressed in brain, including in mesencephalic dopaminergic neurons of the substantia nigra and ventral tegmental area and oligodendrocytes. Expressed in cortical pyramidal neurons and granule cells of the hippocampus (at protein level).

It is found in the cytoplasm. The protein resides in the microsome membrane. The protein localises to the mitochondrion membrane. Its subcellular location is the endoplasmic reticulum membrane. The catalysed reaction is L-aspartate + acetyl-CoA = N-acetyl-L-aspartate + CoA + H(+). With respect to regulation, aminooxyacetic acid (AOAA) blocks its activity in both cytoplasm and mitochondria. Its function is as follows. Catalyzes the synthesis of N-acetylaspartate acid (NAA) from L-aspartate and acetyl-CoA. Promotes dopamine uptake by regulating TNF-alpha expression. Attenuates methamphetamine-induced inhibition of dopamine uptake. This is N-acetylaspartate synthetase (Nat8l) from Rattus norvegicus (Rat).